The chain runs to 219 residues: Probable GTP-binding protein EngB (219 aa).

In terms of domain architecture, EngB-type G spans 26–200; sequence EGVEIAFAGR…RAKLDTWFAP (175 aa). GTP-binding positions include 34-41, 61-65, 79-82, 146-149, and 179-181; these read GRSNAGKS, GRTQL, DLPG, TKAD, and FSS. Residues Ser-41 and Thr-63 each coordinate Mg(2+).

It belongs to the TRAFAC class TrmE-Era-EngA-EngB-Septin-like GTPase superfamily. EngB GTPase family. It depends on Mg(2+) as a cofactor.

In terms of biological role, necessary for normal cell division and for the maintenance of normal septation. The chain is Probable GTP-binding protein EngB from Vibrio parahaemolyticus serotype O3:K6 (strain RIMD 2210633).